The sequence spans 125 residues: Ribosome-binding factor A (125 aa).

Belongs to the RbfA family. Monomer. Binds 30S ribosomal subunits, but not 50S ribosomal subunits or 70S ribosomes.

The protein localises to the cytoplasm. In terms of biological role, one of several proteins that assist in the late maturation steps of the functional core of the 30S ribosomal subunit. Associates with free 30S ribosomal subunits (but not with 30S subunits that are part of 70S ribosomes or polysomes). Required for efficient processing of 16S rRNA. May interact with the 5'-terminal helix region of 16S rRNA. This Xylella fastidiosa (strain 9a5c) protein is Ribosome-binding factor A.